Consider the following 211-residue polypeptide: Phosphoserine phosphatase 1 (211 aa).

His-9 serves as the catalytic Tele-phosphohistidine intermediate. The active site involves His-150.

It belongs to the histidine phosphatase superfamily. Metal-independent phosphoserine phosphatase family. Homodimer. Can also form a heterodimer with PspB.

It catalyses the reaction O-phospho-L-serine + H2O = L-serine + phosphate. The catalysed reaction is O-phospho-D-serine + H2O = D-serine + phosphate. It functions in the pathway amino-acid biosynthesis; L-serine biosynthesis; L-serine from 3-phospho-D-glycerate: step 3/3. Its activity is regulated as follows. Activity is not inhibited by EDTA in vitro, nor enhanced by the addition of Mg(2+). Catalyzes the dephosphorylation of L-phosphoserine to serine and inorganic phosphate. Is poorly or not active toward D-phosphoserine, DL-phosphothreonine, 3-phosphoglycerate, para-nitrophenylphosphate, and fructose-6-phosphate. Does not display phosphoglycerate mutase activity. In Hydrogenobacter thermophilus (strain DSM 6534 / IAM 12695 / TK-6), this protein is Phosphoserine phosphatase 1 (pspA).